Consider the following 320-residue polypeptide: tRNA uridine(34) hydroxylase (320 aa).

A Rhodanese domain is found at 123–217 (EDENTVILDA…YGKDPETKGQ (95 aa)). Cysteine 177 acts as the Cysteine persulfide intermediate in catalysis.

This sequence belongs to the TrhO family.

It carries out the reaction uridine(34) in tRNA + AH2 + O2 = 5-hydroxyuridine(34) in tRNA + A + H2O. Functionally, catalyzes oxygen-dependent 5-hydroxyuridine (ho5U) modification at position 34 in tRNAs. The chain is tRNA uridine(34) hydroxylase from Staphylococcus epidermidis (strain ATCC 12228 / FDA PCI 1200).